A 157-amino-acid polypeptide reads, in one-letter code: Mini-ribonuclease 3 (157 aa).

The active site involves Asp-18. The tract at residues 126–157 (EEDEGKGKGETAKEEESITDALSPAEQSEIDC) is disordered. Basic and acidic residues predominate over residues 130–141 (GKGKGETAKEEE).

This sequence belongs to the MrnC RNase family. In terms of assembly, homodimer. Mg(2+) is required as a cofactor.

Its subcellular location is the cytoplasm. Its function is as follows. Involved in correct processing of both the 5' and 3' ends of 23S rRNA precursor. Processes 30S rRNA precursor transcript even in absence of ribonuclease 3 (Rnc); Rnc processes 30S rRNA into smaller rRNA precursors. This Desulfitobacterium hafniense (strain Y51) protein is Mini-ribonuclease 3.